Reading from the N-terminus, the 432-residue chain is Glutamate-1-semialdehyde 2,1-aminomutase (432 aa).

At Lys-269 the chain carries N6-(pyridoxal phosphate)lysine.

This sequence belongs to the class-III pyridoxal-phosphate-dependent aminotransferase family. HemL subfamily. In terms of assembly, homodimer. The cofactor is pyridoxal 5'-phosphate.

It localises to the cytoplasm. It catalyses the reaction (S)-4-amino-5-oxopentanoate = 5-aminolevulinate. Its pathway is porphyrin-containing compound metabolism; protoporphyrin-IX biosynthesis; 5-aminolevulinate from L-glutamyl-tRNA(Glu): step 2/2. The protein operates within porphyrin-containing compound metabolism; chlorophyll biosynthesis. The protein is Glutamate-1-semialdehyde 2,1-aminomutase of Chloroherpeton thalassium (strain ATCC 35110 / GB-78).